The following is a 201-amino-acid chain: Alpha-1-acid glycoprotein 1 (201 aa).

Positions 1–18 are cleaved as a signal peptide; the sequence is MALSWVLTVLSLLPLLEA. Pyrrolidone carboxylic acid is present on Gln19. 2 disulfides stabilise this stretch: Cys23-Cys165 and Cys90-Cys183. An N-linked (GlcNAc...) (complex) asparagine glycan is attached at Asn33. N-linked (GlcNAc...) asparagine glycosylation is present at Asn56. Asn72 carries an N-linked (GlcNAc...) (complex) asparagine glycan. 2 N-linked (GlcNAc...) asparagine glycosylation sites follow: Asn93 and Asn103.

The protein belongs to the calycin superfamily. Lipocalin family. Post-translationally, N-glycosylated. N-glycan heterogeneity at Asn-33: Hex5HexNAc4 (minor), Hex6HexNAc5 (major) and dHex1Hex6HexNAc5 (minor). Expressed by the liver and secreted in plasma.

It is found in the secreted. Functionally, functions as a transport protein in the blood stream. Binds various ligands in the interior of its beta-barrel domain. Also binds synthetic drugs and influences their distribution and availability in the body. Appears to function in modulating the activity of the immune system during the acute-phase reaction. This Homo sapiens (Human) protein is Alpha-1-acid glycoprotein 1 (ORM1).